A 363-amino-acid chain; its full sequence is UDP-N-acetylglucosamine--N-acetylmuramyl-(pentapeptide) pyrophosphoryl-undecaprenol N-acetylglucosamine transferase (363 aa).

UDP-N-acetyl-alpha-D-glucosamine is bound by residues 14 to 16 (TGG), arginine 171, serine 200, and glutamine 290.

It belongs to the glycosyltransferase 28 family. MurG subfamily.

It is found in the cell inner membrane. The catalysed reaction is di-trans,octa-cis-undecaprenyl diphospho-N-acetyl-alpha-D-muramoyl-L-alanyl-D-glutamyl-meso-2,6-diaminopimeloyl-D-alanyl-D-alanine + UDP-N-acetyl-alpha-D-glucosamine = di-trans,octa-cis-undecaprenyl diphospho-[N-acetyl-alpha-D-glucosaminyl-(1-&gt;4)]-N-acetyl-alpha-D-muramoyl-L-alanyl-D-glutamyl-meso-2,6-diaminopimeloyl-D-alanyl-D-alanine + UDP + H(+). It functions in the pathway cell wall biogenesis; peptidoglycan biosynthesis. Its function is as follows. Cell wall formation. Catalyzes the transfer of a GlcNAc subunit on undecaprenyl-pyrophosphoryl-MurNAc-pentapeptide (lipid intermediate I) to form undecaprenyl-pyrophosphoryl-MurNAc-(pentapeptide)GlcNAc (lipid intermediate II). The chain is UDP-N-acetylglucosamine--N-acetylmuramyl-(pentapeptide) pyrophosphoryl-undecaprenol N-acetylglucosamine transferase from Borreliella afzelii (strain PKo) (Borrelia afzelii).